Here is a 128-residue protein sequence, read N- to C-terminus: Small ribosomal subunit protein uS11 (128 aa).

This sequence belongs to the universal ribosomal protein uS11 family. Part of the 30S ribosomal subunit. Interacts with proteins S7 and S18. Binds to IF-3.

In terms of biological role, located on the platform of the 30S subunit, it bridges several disparate RNA helices of the 16S rRNA. Forms part of the Shine-Dalgarno cleft in the 70S ribosome. The chain is Small ribosomal subunit protein uS11 from Ligilactobacillus salivarius (strain UCC118) (Lactobacillus salivarius).